The chain runs to 557 residues: Potassium-transporting ATPase potassium-binding subunit (557 aa).

The next 12 helical transmembrane spans lie at 5–25, 63–83, 132–152, 170–190, 253–273, 283–303, 329–349, 356–376, 379–399, 416–436, 484–504, and 526–546; these read GFLL…PLGS, LCAI…MLLG, GLTV…FALI, LLRI…LFFI, FVQM…FGEV, LLWA…WAEV, VLVS…AVIA, ALGG…FGGV, GLYG…LMIG, LTAL…ALAM, LLAF…MAIA, and LFVG…FIPA.

This sequence belongs to the KdpA family. In terms of assembly, the system is composed of three essential subunits: KdpA, KdpB and KdpC.

It localises to the cell inner membrane. Its function is as follows. Part of the high-affinity ATP-driven potassium transport (or Kdp) system, which catalyzes the hydrolysis of ATP coupled with the electrogenic transport of potassium into the cytoplasm. This subunit binds the periplasmic potassium ions and delivers the ions to the membrane domain of KdpB through an intramembrane tunnel. This chain is Potassium-transporting ATPase potassium-binding subunit, found in Escherichia coli (strain K12 / MC4100 / BW2952).